We begin with the raw amino-acid sequence, 437 residues long: Phosphoglucosamine mutase (437 aa).

The active-site Phosphoserine intermediate is Ser93. The Mg(2+) site is built by Ser93, Asp230, Asp232, and Asp234. Ser93 bears the Phosphoserine mark.

Belongs to the phosphohexose mutase family. The cofactor is Mg(2+). Post-translationally, activated by phosphorylation.

It catalyses the reaction alpha-D-glucosamine 1-phosphate = D-glucosamine 6-phosphate. Catalyzes the conversion of glucosamine-6-phosphate to glucosamine-1-phosphate. This chain is Phosphoglucosamine mutase, found in Clavibacter michiganensis subsp. michiganensis (strain NCPPB 382).